We begin with the raw amino-acid sequence, 702 residues long: Elongation factor G (702 aa).

The 279-residue stretch at 8-286 (DKVRNIGIIA…AVVEYLPSPL (279 aa)) folds into the tr-type G domain. Residues 17–24 (AHIDAGKT), 85–89 (DTPGH), and 139–142 (NKMD) contribute to the GTP site.

The protein belongs to the TRAFAC class translation factor GTPase superfamily. Classic translation factor GTPase family. EF-G/EF-2 subfamily.

It is found in the cytoplasm. Functionally, catalyzes the GTP-dependent ribosomal translocation step during translation elongation. During this step, the ribosome changes from the pre-translocational (PRE) to the post-translocational (POST) state as the newly formed A-site-bound peptidyl-tRNA and P-site-bound deacylated tRNA move to the P and E sites, respectively. Catalyzes the coordinated movement of the two tRNA molecules, the mRNA and conformational changes in the ribosome. The sequence is that of Elongation factor G from Chloroflexus aggregans (strain MD-66 / DSM 9485).